The following is a 183-amino-acid chain: Adenine phosphoribosyltransferase (183 aa).

This sequence belongs to the purine/pyrimidine phosphoribosyltransferase family. As to quaternary structure, homodimer.

It is found in the cytoplasm. It catalyses the reaction AMP + diphosphate = 5-phospho-alpha-D-ribose 1-diphosphate + adenine. The protein operates within purine metabolism; AMP biosynthesis via salvage pathway; AMP from adenine: step 1/1. Its function is as follows. Catalyzes a salvage reaction resulting in the formation of AMP, that is energically less costly than de novo synthesis. The polypeptide is Adenine phosphoribosyltransferase (Salmonella gallinarum (strain 287/91 / NCTC 13346)).